Reading from the N-terminus, the 185-residue chain is Ribosome-recycling factor (185 aa).

Belongs to the RRF family.

It localises to the cytoplasm. Functionally, responsible for the release of ribosomes from messenger RNA at the termination of protein biosynthesis. May increase the efficiency of translation by recycling ribosomes from one round of translation to another. The chain is Ribosome-recycling factor from Pseudomonas putida (strain ATCC 700007 / DSM 6899 / JCM 31910 / BCRC 17059 / LMG 24140 / F1).